A 942-amino-acid polypeptide reads, in one-letter code: Protein FAM184B (942 aa).

Disordered regions lie at residues 1-26 (MASA…RGGS) and 73-97 (QEDL…TSED). 3 coiled-coil regions span residues 89–150 (QEQS…RVLI), 196–337 (EMHQ…DRLM), and 387–495 (SETQ…SLLE). The segment at 486–542 (STKLQNSLLEDPCSRPKKPARDEGLEKLTDEEESSSDEEERTGESVKGKSDLQPPFE) is disordered. Over residues 504–513 (PARDEGLEKL) the composition is skewed to basic and acidic residues. Acidic residues predominate over residues 514 to 526 (TDEEESSSDEEER). Coiled-coil stretches lie at residues 575–619 (NKDS…ESLR) and 686–815 (EKGL…ERRF). Residues 880-934 (APPITKSPSLDPSPSCSQPYKPTQLLDGKTASRTQDGEPAQPKEAPQKQGSPHQE) form a disordered region. The segment covering 885 to 900 (KSPSLDPSPSCSQPYK) has biased composition (polar residues).

The protein belongs to the FAM184 family.

This Mus musculus (Mouse) protein is Protein FAM184B (Fam184b).